The following is a 1140-amino-acid chain: uncharacterized protein (1140 aa).

7 disordered regions span residues 1-49, 97-243, 280-427, 512-541, 702-747, 916-1059, and 1080-1103; these read MGSS…TSPE, SSDI…STIS, TSSS…KSSV, ASST…DLSK, FSTP…STAS, CPEK…PIGR, and LSSS…GTSS. Residues 105–129 are compositionally biased toward polar residues; it reads VNDVESSTSGPSNSYSALSSTNAQL. Low complexity-rich tracts occupy residues 130–154, 172–214, and 221–243; these read SSST…TSSS, TTAS…TTSD, and SSST…STIS. A compositionally biased stretch (polar residues) spans 516-528; the sequence is LGSKVSSSNSRMA. Low complexity-rich tracts occupy residues 529-541 and 703-718; these read TSKT…DLSK and STPE…VTSE. Positions 719–733 are enriched in polar residues; that stretch reads APSTVSSMTTSAPFI. Residues 734–747 show a composition bias toward low complexity; it reads NNSTSARPSPSTAS. A compositionally biased stretch (basic and acidic residues) spans 949 to 961; that stretch reads SFKDMKTSQETKK. Over residues 977–997 the composition is skewed to low complexity; that stretch reads EKTSPTTKASPSTSPSESKAA. Composition is skewed to polar residues over residues 998-1023, 1031-1055, and 1089-1103; these read GNTS…STSV, TKNS…STES, and RSTT…GTSS.

This is an uncharacterized protein from Saccharomyces cerevisiae (strain ATCC 204508 / S288c) (Baker's yeast).